Here is a 213-residue protein sequence, read N- to C-terminus: Adenylate kinase (213 aa).

14 to 19 serves as a coordination point for ATP; the sequence is GSGKGT. Residues 34–63 form an NMP region; it reads STGDLLRAIIREGTPNGLKAKAYLDKGAFV. AMP contacts are provided by residues Thr35, Arg40, 61 to 63, 89 to 92, and Gln96; these read AFV and GFPR. The segment at 129–162 is LID; sequence SRFLCPSCSRIYNTSQGHTECPDCHVPLIRRSDD. Arg130 contributes to the ATP binding site. Residues Cys133 and Cys136 each coordinate Zn(2+). 139–140 provides a ligand contact to ATP; that stretch reads IY. The Zn(2+) site is built by Cys149 and Cys152. AMP is bound by residues Arg159 and Arg170. Residue Asn198 participates in ATP binding.

Belongs to the adenylate kinase family. In terms of assembly, monomer.

The protein resides in the cytoplasm. The catalysed reaction is AMP + ATP = 2 ADP. Its pathway is purine metabolism; AMP biosynthesis via salvage pathway; AMP from ADP: step 1/1. Its function is as follows. Catalyzes the reversible transfer of the terminal phosphate group between ATP and AMP. Plays an important role in cellular energy homeostasis and in adenine nucleotide metabolism. This Chlamydia pneumoniae (Chlamydophila pneumoniae) protein is Adenylate kinase.